Consider the following 276-residue polypeptide: Secreted RxLR effector protein 150 (276 aa).

The first 18 residues, 1–18 (MRNIAFLIGLFFIGYSSC), serve as a signal peptide directing secretion. Positions 49–64 (RTLQADDRERILAEER) match the RxLR-dEER motif.

The protein belongs to the RxLR effector family.

It is found in the secreted. It localises to the host nucleus. The protein resides in the host cytoplasm. Its function is as follows. Secreted effector that partially suppresses the host cell death induced by cell death-inducing proteins. In Plasmopara viticola (Downy mildew of grapevine), this protein is Secreted RxLR effector protein 150.